The primary structure comprises 78 residues: MHEQLSPRDQELEARLVELETRLSFQEQALTELSEALADARLTGARNAELIRHLLEDLGKVRSTLFADAADEPPPPHY.

The protein belongs to the SlyX family.

This Xanthomonas campestris pv. campestris (strain 8004) protein is Protein SlyX homolog.